The chain runs to 432 residues: Enolase (432 aa).

(2R)-2-phosphoglycerate is bound at residue Gln-167. Glu-209 serves as the catalytic Proton donor. 3 residues coordinate Mg(2+): Asp-246, Glu-291, and Asp-318. Positions 343, 372, 373, and 394 each coordinate (2R)-2-phosphoglycerate. The active-site Proton acceptor is Lys-343.

It belongs to the enolase family. Component of the RNA degradosome, a multiprotein complex involved in RNA processing and mRNA degradation. It depends on Mg(2+) as a cofactor.

The protein localises to the cytoplasm. Its subcellular location is the secreted. It localises to the cell surface. The catalysed reaction is (2R)-2-phosphoglycerate = phosphoenolpyruvate + H2O. Its pathway is carbohydrate degradation; glycolysis; pyruvate from D-glyceraldehyde 3-phosphate: step 4/5. Its function is as follows. Catalyzes the reversible conversion of 2-phosphoglycerate (2-PG) into phosphoenolpyruvate (PEP). It is essential for the degradation of carbohydrates via glycolysis. This chain is Enolase, found in Pseudoalteromonas translucida (strain TAC 125).